The chain runs to 346 residues: UDP-3-O-acylglucosamine N-acyltransferase (346 aa).

H253 acts as the Proton acceptor in catalysis.

The protein belongs to the transferase hexapeptide repeat family. LpxD subfamily. Homotrimer.

It catalyses the reaction a UDP-3-O-[(3R)-3-hydroxyacyl]-alpha-D-glucosamine + a (3R)-hydroxyacyl-[ACP] = a UDP-2-N,3-O-bis[(3R)-3-hydroxyacyl]-alpha-D-glucosamine + holo-[ACP] + H(+). It participates in bacterial outer membrane biogenesis; LPS lipid A biosynthesis. Functionally, catalyzes the N-acylation of UDP-3-O-acylglucosamine using 3-hydroxyacyl-ACP as the acyl donor. Is involved in the biosynthesis of lipid A, a phosphorylated glycolipid that anchors the lipopolysaccharide to the outer membrane of the cell. This is UDP-3-O-acylglucosamine N-acyltransferase from Rickettsia prowazekii (strain Madrid E).